The sequence spans 260 residues: Triosephosphate isomerase (260 aa).

11 to 13 (NWK) provides a ligand contact to substrate. His103 acts as the Electrophile in catalysis. The Proton acceptor role is filled by Glu175. Residues Gly181, Ser220, and 241–242 (GG) each bind substrate.

This sequence belongs to the triosephosphate isomerase family. Homodimer.

Its subcellular location is the cytoplasm. It carries out the reaction D-glyceraldehyde 3-phosphate = dihydroxyacetone phosphate. It functions in the pathway carbohydrate biosynthesis; gluconeogenesis. It participates in carbohydrate degradation; glycolysis; D-glyceraldehyde 3-phosphate from glycerone phosphate: step 1/1. In terms of biological role, involved in the gluconeogenesis. Catalyzes stereospecifically the conversion of dihydroxyacetone phosphate (DHAP) to D-glyceraldehyde-3-phosphate (G3P). In Shewanella amazonensis (strain ATCC BAA-1098 / SB2B), this protein is Triosephosphate isomerase.